A 389-amino-acid chain; its full sequence is Large envelope protein (389 aa).

An N-acetylmethionine modification is found at methionine 1. Residue glycine 2 is the site of N-myristoyl glycine; by host attachment. The segment at 2 to 108 is pre-S1; it reads GQNLSTSNPL…PPLRDTHPQA (107 aa). The segment at 2–163 is pre-S; the sequence is GQNLSTSNPL…FSTTGDPAPN (162 aa). Topologically, residues 2–170 are virion surface; in external conformation; sequence GQNLSTSNPL…APNMENITSG (169 aa). The Intravirion; in internal conformation segment spans residues 2 to 242; that stretch reads GQNLSTSNPL…PGYRWMCLRR (241 aa). The tract at residues 75 to 107 is disordered; the sequence is TTLPANPPPASTNRQSGRQPTPLSPPLRDTHPQ. A compositionally biased stretch (polar residues) spans 85–95; it reads STNRQSGRQPT. A pre-S2 region spans residues 109 to 163; it reads MQWNSTTFHQALQDPRVRGLYFPAGGSSSGTLNPVPNTASHISSVFSTTGDPAPN. The helical transmembrane segment at 171 to 191 threads the bilayer; the sequence is FLGPLLVLQAGFFLLTKILTI. Over 192-242 the chain is Intravirion; in external conformation; sequence PQSLDSWWTSLNFLGGAPVCLGQNSQSPTSNHSPTSCPPICPGYRWMCLRR. The helical transmembrane segment at 243 to 263 threads the bilayer; the sequence is FIIFLFILLLCLIFLLVLLDY. The Virion surface segment spans residues 264–337; it reads QGMLPVCPLI…WASVRFSWLS (74 aa). The N-linked (GlcNAc...) asparagine; by host glycan is linked to asparagine 309. The chain crosses the membrane as a helical span at residues 338–358; the sequence is LLAPFVQWFAGLSPTVWLLAI. Topologically, residues 359-364 are intravirion; sequence WMMWYW. The helical transmembrane segment at 365-387 threads the bilayer; it reads GPNLYNILSPFIPLLPIFFCLWV. Over 388–389 the chain is Virion surface; the sequence is YI.

It belongs to the orthohepadnavirus major surface antigen family. In its internal form (Li-HBsAg), interacts with the capsid protein and with the isoform S. Interacts with host chaperone CANX. In terms of assembly, associates with host chaperone CANX through its pre-S2 N glycan; this association may be essential for isoform M proper secretion. As to quaternary structure, interacts with isoform L. Interacts with the antigens of satellite virus HDV (HDVAgs); this interaction is required for encapsidation of HDV genomic RNA. In terms of processing, isoform M is N-terminally acetylated by host at a ratio of 90%, and N-glycosylated by host at the pre-S2 region. Post-translationally, myristoylated.

It localises to the virion membrane. Functionally, the large envelope protein exists in two topological conformations, one which is termed 'external' or Le-HBsAg and the other 'internal' or Li-HBsAg. In its external conformation the protein attaches the virus to cell receptors and thereby initiating infection. This interaction determines the species specificity and liver tropism. This attachment induces virion internalization predominantly through caveolin-mediated endocytosis. The large envelope protein also assures fusion between virion membrane and endosomal membrane. In its internal conformation the protein plays a role in virion morphogenesis and mediates the contact with the nucleocapsid like a matrix protein. The middle envelope protein plays an important role in the budding of the virion. It is involved in the induction of budding in a nucleocapsid independent way. In this process the majority of envelope proteins bud to form subviral lipoprotein particles of 22 nm of diameter that do not contain a nucleocapsid. The protein is Large envelope protein of Pan troglodytes (Chimpanzee).